The sequence spans 612 residues: Proline-rich protein 14 (612 aa).

At Met-1 the chain carries N-acetylmethionine. Polar residues-rich tracts occupy residues 1 to 15 and 86 to 96; these read MDLPGNSSPFTQPSL and VCTQSPALPSQ. Disordered regions lie at residues 1–48, 65–96, 119–150, and 206–256; these read MDLP…EKAS, VPLTHKEDTPSPLTHNHHQDPVCTQSPALPSQ, RARQSSPALRMRSRAASGPEESPSKKTDQVPQ, and PTLT…PALE. Positions 1-135 are sufficient for heterochromatin association in interphase and chromatin association in anaphase; that stretch reads MDLPGNSSPF…ALRMRSRAAS (135 aa). A required for the interaction with GRB2 and sufficient to promote the phosphorylation of AKT and cell proliferation region spans residues 85–405; the sequence is PVCTQSPALP…MARTPPPPRP (321 aa). The tract at residues 136–392 is required for nuclear lamina association; sequence GPEESPSKKT…QSRPRRHTVG (257 aa). The span at 243–252 shows a compositional bias: pro residues; it reads ADPPESPVPD. Ser-307 carries the phosphoserine modification. Disordered regions lie at residues 323 to 405, 444 to 463, and 553 to 583; these read QSRA…PPRP, LGSTKGKELRASKDKVFSDP, and DSSLPRSRRPSRGVRTAASRTLTPNLAPSQD. Residues 342-359 show a composition bias toward polar residues; that stretch reads WRTQCNSLAPVSKSSLGR. Residues 366–379 show a composition bias toward pro residues; the sequence is LGPPDPGSWPPVPS. Positions 448 to 463 are enriched in basic and acidic residues; that stretch reads KGKELRASKDKVFSDP. The segment at 546–563 is required for nuclear localization; that stretch reads RRAVEFRDSSLPRSRRPS. Residues 570–583 are compositionally biased toward polar residues; that stretch reads ASRTLTPNLAPSQD.

In terms of assembly, interacts (via proline-rich region) with GRB2 (via SH3 domain 2). Interacts (via N-terminus) with CBX5.

It localises to the chromosome. The protein resides in the nucleus. The protein localises to the nucleus lamina. It is found in the nucleoplasm. In terms of biological role, functions in tethering peripheral heterochromatin to the nuclear lamina during interphase, possibly through the interaction with heterochromatin protein CBX5/HP1 alpha. Might play a role in reattaching heterochromatin to the nuclear lamina at mitotic exit. Promotes myoblast differentiation during skeletal myogenesis, possibly by stimulating transcription factor MyoD activity via binding to CBX5/HP1 alpha. Involved in the positive regulation of the PI3K-Akt-mTOR signaling pathway and in promoting cell proliferation, possibly via binding to GRB2. This chain is Proline-rich protein 14 (Prr14), found in Mus musculus (Mouse).